The chain runs to 146 residues: Large ribosomal subunit protein uL15 (146 aa).

The tract at residues 1–57 is disordered; the sequence is MKLFELQPAPGSKKLPKRKGRGHGTGNGKTAGRGHKGQNARSGGGVRPGFEGGQMPL. A compositionally biased stretch (gly residues) spans 42–52; the sequence is SGGGVRPGFEG.

It belongs to the universal ribosomal protein uL15 family. As to quaternary structure, part of the 50S ribosomal subunit.

In terms of biological role, binds to the 23S rRNA. The chain is Large ribosomal subunit protein uL15 from Acetivibrio thermocellus (strain ATCC 27405 / DSM 1237 / JCM 9322 / NBRC 103400 / NCIMB 10682 / NRRL B-4536 / VPI 7372) (Clostridium thermocellum).